Consider the following 628-residue polypeptide: Phosphomethylpyrimidine synthase (628 aa).

Substrate contacts are provided by residues N225, M254, Y283, H319, 339–341 (SRG), 380–383 (DGLR), and E419. Residue H423 participates in Zn(2+) binding. Position 446 (Y446) interacts with substrate. H487 serves as a coordination point for Zn(2+). [4Fe-4S] cluster-binding residues include C567, C570, and C575.

The protein belongs to the ThiC family. Homodimer. Requires [4Fe-4S] cluster as cofactor.

The enzyme catalyses 5-amino-1-(5-phospho-beta-D-ribosyl)imidazole + S-adenosyl-L-methionine = 4-amino-2-methyl-5-(phosphooxymethyl)pyrimidine + CO + 5'-deoxyadenosine + formate + L-methionine + 3 H(+). The protein operates within cofactor biosynthesis; thiamine diphosphate biosynthesis. Functionally, catalyzes the synthesis of the hydroxymethylpyrimidine phosphate (HMP-P) moiety of thiamine from aminoimidazole ribotide (AIR) in a radical S-adenosyl-L-methionine (SAM)-dependent reaction. This is Phosphomethylpyrimidine synthase from Leptothrix cholodnii (strain ATCC 51168 / LMG 8142 / SP-6) (Leptothrix discophora (strain SP-6)).